We begin with the raw amino-acid sequence, 284 residues long: uncharacterized protein (284 aa).

Residues 4-133 form the Photolyase/cryptochrome alpha/beta domain; it reads PLHLFWHRRD…AVHRQWDQLL (130 aa).

This is an uncharacterized protein from Synechococcus sp. (strain PCC 6716).